The primary structure comprises 338 residues: Large ribosomal subunit protein uL3 (338 aa).

Disordered regions lie at residues 1–44 (MPQP…GFAG), 151–170 (AVPSVPKKKPDVMETRVGGG), 206–259 (VTKG…GQTG), and 312–338 (FRPAVRPNDQPRLDPEVRYVSNESNQG). Polar residues predominate over residues 22-31 (SETPRFNSWP). Over residues 220-237 (GVQKRKGKHARQGWRRRI) the composition is skewed to basic residues. A compositionally biased stretch (polar residues) spans 247 to 259 (RVRSTVPQQGQTG).

This sequence belongs to the universal ribosomal protein uL3 family. As to quaternary structure, part of the 50S ribosomal subunit. Forms a cluster with proteins L14 and L24e. Interacts weakly with protein L13.

Its function is as follows. One of the primary rRNA binding proteins, it binds directly near the 3'-end of the 23S rRNA, where it nucleates assembly of the 50S subunit. This chain is Large ribosomal subunit protein uL3 (rpl3), found in Haloarcula marismortui (strain ATCC 43049 / DSM 3752 / JCM 8966 / VKM B-1809) (Halobacterium marismortui).